Here is a 469-residue protein sequence, read N- to C-terminus: Glutamine synthetase (469 aa).

Positions 15 to 96 (EDVKFVDVRF…INFFIHDPIT (82 aa)) constitute a GS beta-grasp domain. Residues 104–469 (PRNVAKKAEA…PHEFEMYFDV (366 aa)) enclose the GS catalytic domain. Residues Glu129 and Glu131 each coordinate Mg(2+). Glu205 provides a ligand contact to ATP. Mg(2+)-binding residues include Glu210 and Glu218. ATP is bound at residue 221 to 223 (YKF). L-glutamate-binding positions include 262–263 (NG) and Gly263. A Mg(2+)-binding site is contributed by His267. ATP is bound by residues 269-271 (HQS) and Ser271. Residues Arg320, Glu326, and Arg338 each coordinate L-glutamate. The ATP site is built by Arg338, Arg343, and Lys352. Glu357 contacts Mg(2+). Arg359 serves as a coordination point for L-glutamate. Tyr397 carries the post-translational modification O-AMP-tyrosine.

Belongs to the glutamine synthetase family. As to quaternary structure, oligomer of 12 subunits arranged in the form of two hexagons. Mg(2+) serves as cofactor.

It is found in the cytoplasm. The enzyme catalyses L-glutamate + NH4(+) + ATP = L-glutamine + ADP + phosphate + H(+). With respect to regulation, the activity of this enzyme could be controlled by adenylation under conditions of abundant glutamine. Functionally, catalyzes the ATP-dependent biosynthesis of glutamine from glutamate and ammonia. Complements L-glutamine auxotrophy of an E.coli glnA mutant. This Streptomyces coelicolor (strain ATCC BAA-471 / A3(2) / M145) protein is Glutamine synthetase.